The sequence spans 90 residues: Small ribosomal subunit protein bS16 (90 aa).

Belongs to the bacterial ribosomal protein bS16 family.

This chain is Small ribosomal subunit protein bS16, found in Clostridioides difficile (strain 630) (Peptoclostridium difficile).